A 265-amino-acid chain; its full sequence is Protein B8 (265 aa).

The protein is Protein B8 (B8) of Homo sapiens (Human).